We begin with the raw amino-acid sequence, 64 residues long: Basic secretory protease (64 aa).

It depends on a divalent metal cation as a cofactor. Glycosylated.

With respect to regulation, inhibited by EDTA. Functionally, metalloprotease, digests gelatin and azocasein (in vitro). This is Basic secretory protease from Boswellia serrata (Indian frankincense).